The primary structure comprises 78 residues: Large ribosomal subunit protein bL28 (78 aa).

This sequence belongs to the bacterial ribosomal protein bL28 family.

This Tropheryma whipplei (strain TW08/27) (Whipple's bacillus) protein is Large ribosomal subunit protein bL28.